Here is a 733-residue protein sequence, read N- to C-terminus: Zinc finger protein indra (733 aa).

The 75-residue stretch at 17–91 (VRCDHCGTSQ…RETVDRVQEQ (75 aa)) folds into the ZAD domain. Positions 19, 22, 64, and 67 each coordinate Zn(2+). Residues 90–100 (EQPAKKTKVAE) are compositionally biased toward basic and acidic residues. Residues 90–121 (EQPAKKTKVAEIEEPSTQESDKKAVKVPKKNT) form a disordered region. Ser-109, Ser-153, and Ser-176 each carry phosphoserine. Thr-180 and Thr-188 each carry phosphothreonine. 2 consecutive C2H2-type zinc fingers follow at residues 228-251 (FQCPECEFHAKFPKPYKEHLQKEH) and 259-282 (YPCTLCIKTFGVLKTLKNHLRDTH). Positions 285–316 (TFESEAKTKAKESKEKEAKSGAKNKIDAKAKE) are enriched in basic and acidic residues. Positions 285–336 (TFESEAKTKAKESKEKEAKSGAKNKIDAKAKETNAVSQRKKPKEKKSKEKKT) are disordered. 2 consecutive C2H2-type zinc fingers follow at residues 416 to 439 (FQCEICDCELMTAKQMQEHMKTVH) and 447 to 469 (FKCHVCEKSLATKQSLKTHMTLH). Disordered stretches follow at residues 499 to 525 (IENTAEKVEGPKKSQQSPTKAAKFTNR) and 540 to 622 (AFKT…SSDV). Positions 592 to 602 (SVSTTNGNSPA) are enriched in polar residues. A phosphoserine mark is found at Ser-600, Ser-642, and Ser-646. Thr-647 is modified (phosphothreonine). 2 C2H2-type zinc fingers span residues 653-676 (LSCDRCGKFVKSRQRLDSHMEKKH) and 708-733 (LPCGVANCKKVFTEANFLSSHLRKRH). The residue at position 654 (Ser-654) is a Phosphoserine.

Belongs to the krueppel C2H2-type zinc-finger protein family.

The protein localises to the nucleus. It is found in the nucleolus. Functionally, required for rDNA copy number maintenance and non-random sister chromatid segregation (NRSS) following unequal sister chromatid exchange. Binds ribosomal DNA (rDNA) preferentially binding to intergenic spacers (IGS) regions on both X and Y chromosomes. Essential for NRSS, a mechanism which contributes to the recovery and maintenance of inherently unstable rDNA copy numbers so that the integrity of the germline genome is upheld over generations and germline immortality is sustained. May be involved in transcriptional regulation. The sequence is that of Zinc finger protein indra from Drosophila melanogaster (Fruit fly).